A 158-amino-acid polypeptide reads, in one-letter code: uncharacterized protein (158 aa).

Residues 12–73 (LDEIDRAILR…LINPFKAGYE (62 aa)) form the HTH asnC-type domain. A DNA-binding region (H-T-H motif) is located at residues 31–50 (YSEISRRINVPESTVRARVN).

This is an uncharacterized protein from Pyrococcus abyssi (strain GE5 / Orsay).